Here is a 202-residue protein sequence, read N- to C-terminus: LexA repressor (202 aa).

Residues 28 to 48 (RAEIAQRLGFRSPNAAEEHLK) constitute a DNA-binding region (H-T-H motif). Catalysis depends on for autocatalytic cleavage activity residues serine 119 and lysine 156.

The protein belongs to the peptidase S24 family. Homodimer.

It carries out the reaction Hydrolysis of Ala-|-Gly bond in repressor LexA.. Represses a number of genes involved in the response to DNA damage (SOS response), including recA and lexA. Binds to the 16 bp palindromic sequence 5'-CTGTATATATATACAG-3'. In the presence of single-stranded DNA, RecA interacts with LexA causing an autocatalytic cleavage which disrupts the DNA-binding part of LexA, leading to derepression of the SOS regulon and eventually DNA repair. This Salmonella agona (strain SL483) protein is LexA repressor.